A 572-amino-acid polypeptide reads, in one-letter code: BOS complex subunit ncln (572 aa).

Residues 1–35 form the signal peptide; it reads MFEEAGEVLENMLKVSFPLSLVLFLVLVCPLRAEA. The Extracellular segment spans residues 36-530; sequence AHEFSVYRMQ…TMNAYRVKPA (495 aa). N-linked (GlcNAc...) asparagine glycans are attached at residues asparagine 108, asparagine 234, and asparagine 436. Residues 531 to 551 form a helical membrane-spanning segment; it reads IFDLLLAVCIASYLGVLYLAI. Over 552–572 the chain is Cytoplasmic; it reads QNFGLLYGFLRRVTAPRVKQH.

Belongs to the nicastrin family. As to quaternary structure, component of the multi-pass translocon (MPT) complex.

Its subcellular location is the endoplasmic reticulum membrane. Its function is as follows. Component of the multi-pass translocon (MPT) complex that mediates insertion of multi-pass membrane proteins into the lipid bilayer of membranes. The MPT complex takes over after the SEC61 complex: following membrane insertion of the first few transmembrane segments of proteins by the SEC61 complex, the MPT complex occludes the lateral gate of the SEC61 complex to promote insertion of subsequent transmembrane regions. Antagonizes Nodal signaling and subsequent organization of axial structures during mesodermal patterning. Ectopic expression results in cyclopia, due to a defect in mesendoderm patterning. The polypeptide is BOS complex subunit ncln (ncln) (Danio rerio (Zebrafish)).